The primary structure comprises 438 residues: Protein pop-1 (438 aa).

Positions 1-39 (MMADEELGDEVKVFRRDEDADDDPMISGETSEQQLADDK) are disordered. Residues 1–45 (MMADEELGDEVKVFRRDEDADDDPMISGETSEQQLADDKKEAVME) are sufficient for interaction with beta-catenin/sys-1. A compositionally biased stretch (basic and acidic residues) spans 9 to 18 (DEVKVFRRDE). The interval 88–130 (AALPMFMPLFMNPYAAALRSPSLMFPMGAMSPTFPMFPPSPVY) is involved in nuclear asymmetry. A phosphoserine; by LIT1 mark is found at S118 and S127. The segment at residues 192–262 (VKKPLNAFMW…THKERYPEWS (71 aa)) is a DNA-binding region (HMG box). Basic and acidic residues predominate over residues 250–263 (DKETHKERYPEWSA). 3 disordered regions span residues 250–288 (DKET…ENND), 318–351 (TDRS…PKAN), and 378–438 (TTGA…MCTI). The segment covering 270–279 (NKKKTKKRRD) has biased composition (basic residues). Polar residues-rich tracts occupy residues 324-339 (SDIT…SGAY) and 378-395 (TTGA…SSAG). The segment covering 406-418 (SESDVEEEEDEQI) has biased composition (acidic residues).

The protein belongs to the TCF/LEF family. Interacts (via N-terminal region) with beta-catenin homolog sys-1. Interacts with hda-1. Interacts with bar-1. Interacts with par-5; the interaction is direct and is enhanced by lit-1-mediated pop-1 phosphorylation. The interaction also leads to the subsequent nuclear export of pop-1. Interacts (when phosphorylated on Ser-118 and Ser-127) with lit-1; the interaction is dependent on the beta-catenin-lit-1 complex. Interacts with wrm-1. Interacts with homeobox protein egl-5. Interacts with zinc finger transcription factor ref-2; the interaction is direct and facilitates transcriptional activation; transcription may be repressed by beta-catenin/sys-1. Phosphorylated on Ser-118 and Ser-127 by lit-1 in the beta-catenin-lit-1 complex. Phosphorylation promotes the interaction of pop-1 and par-5 and the subsequent translocation of pop-1 from the nucleus to the cytoplasm.

Its subcellular location is the nucleus. The protein resides in the cytoplasm. In terms of biological role, transcription factor. Part of the Wnt signaling asymmetry pathway. Binds to the consensus sequence, 5'-(C/T)TTTG(A/T)(A/T)(G/C)-3'. Activates or represses target gene expression, depending on upstream Wnt signals and interactions with transcription co-regulators, such as beta-catenin/sys-1 or zinc finger transcription factor ref-2. Essential for the specification of the mesodermal and endodermal cell fates in early embryos. Required in many asymmetrical cell divisions in the early embryo and during larval development. Reciprocal distribution patterns of sys-1 and pop-1 in the daughters of anterior-posterior cell divisions functions in specifying cell fate; a higher sys-1 to pop-1 ratio promotes the posterior cell fate, whereas a low sys-1 to pop-1 ratio promotes the anterior fate. Involved in modulating nuclear localization or nuclear retention of sys-1. Involved in the terminal asymmetrical division of many embryonic neuroblasts; for example in the SMDD/AIY neuron lineage. In complex with ref-2, positively modulates expression of LIM/homeobox protein ttx-3 in anterior daughter cells of the SMDD/AIY lineage. Required for asymmetrical division of somatic gonadal precursor descendants which initiate axis formation required to control organ shape. Similarly, involved in asymmetrical division of seam cells, a stem cell-like lineage. Represses expression of target genes via its interaction with hda-1 histone deacetylase. Required for specification of the M lineage-derived coelomocyte and sex myoblast fate. Regulates coelomocyte fate by positively regulating proliferation and ceh-34 and possibly eya-1 expression in M.dlpa and M.drpa precursors. This is Protein pop-1 from Caenorhabditis elegans.